The sequence spans 156 residues: Lipoprotein signal peptidase (156 aa).

The next 4 helical transmembrane spans lie at 8–28 (IYINIIFFIITVDFYSKKWIL), 39–59 (VFFILNLFHVHNFGAAFSILS), 67–87 (YFLLIFSIIIILAIIKIMIKF), and 99–119 (SLILAGAIGNLIDRINYGFVI). Active-site residues include aspartate 120 and aspartate 138. Residues 129–149 (WHFATFNIADFSIFIGMIMII) form a helical membrane-spanning segment.

Belongs to the peptidase A8 family.

It is found in the cell inner membrane. The enzyme catalyses Release of signal peptides from bacterial membrane prolipoproteins. Hydrolyzes -Xaa-Yaa-Zaa-|-(S,diacylglyceryl)Cys-, in which Xaa is hydrophobic (preferably Leu), and Yaa (Ala or Ser) and Zaa (Gly or Ala) have small, neutral side chains.. The protein operates within protein modification; lipoprotein biosynthesis (signal peptide cleavage). In terms of biological role, this protein specifically catalyzes the removal of signal peptides from prolipoproteins. This Buchnera aphidicola subsp. Schizaphis graminum (strain Sg) protein is Lipoprotein signal peptidase.